The sequence spans 238 residues: Probable transcriptional regulatory protein SSP2054 (238 aa).

This sequence belongs to the TACO1 family. YeeN subfamily.

It is found in the cytoplasm. The protein is Probable transcriptional regulatory protein SSP2054 of Staphylococcus saprophyticus subsp. saprophyticus (strain ATCC 15305 / DSM 20229 / NCIMB 8711 / NCTC 7292 / S-41).